Consider the following 372-residue polypeptide: Probable leucine aminopeptidase MCYG_03459 (372 aa).

An N-terminal signal peptide occupies residues M1–A18. N-linked (GlcNAc...) asparagine glycosylation is present at N95. Zn(2+) is bound by residues H175 and D194. N-linked (GlcNAc...) asparagine glycans are attached at residues N195 and N219. Zn(2+) is bound by residues E233 and D260. An intrachain disulfide couples C305 to C309. Position 338 (H338) interacts with Zn(2+).

This sequence belongs to the peptidase M28 family. M28E subfamily. Monomer. Zn(2+) serves as cofactor.

Its subcellular location is the secreted. In terms of biological role, probable extracellular aminopeptidase which contributes to pathogenicity. This is Probable leucine aminopeptidase MCYG_03459 from Arthroderma otae (strain ATCC MYA-4605 / CBS 113480) (Microsporum canis).